The primary structure comprises 338 residues: Ketol-acid reductoisomerase (NADP(+)) (338 aa).

A KARI N-terminal Rossmann domain is found at 1–181 (MQVYYDKDAD…GGGRAGVIET (181 aa)). NADP(+) is bound by residues 24-27 (YGSQ), R47, S50, S52, and 82-85 (DEHQ). H107 is an active-site residue. Position 133 (G133) interacts with NADP(+). The KARI C-terminal knotted domain maps to 182–327 (SFKDETETDL…AKLRDMMPWI (146 aa)). Mg(2+) is bound by residues D190, E194, E226, and E230. S251 contributes to the substrate binding site.

It belongs to the ketol-acid reductoisomerase family. Mg(2+) serves as cofactor.

It catalyses the reaction (2R)-2,3-dihydroxy-3-methylbutanoate + NADP(+) = (2S)-2-acetolactate + NADPH + H(+). It carries out the reaction (2R,3R)-2,3-dihydroxy-3-methylpentanoate + NADP(+) = (S)-2-ethyl-2-hydroxy-3-oxobutanoate + NADPH + H(+). Its pathway is amino-acid biosynthesis; L-isoleucine biosynthesis; L-isoleucine from 2-oxobutanoate: step 2/4. The protein operates within amino-acid biosynthesis; L-valine biosynthesis; L-valine from pyruvate: step 2/4. Functionally, involved in the biosynthesis of branched-chain amino acids (BCAA). Catalyzes an alkyl-migration followed by a ketol-acid reduction of (S)-2-acetolactate (S2AL) to yield (R)-2,3-dihydroxy-isovalerate. In the isomerase reaction, S2AL is rearranged via a Mg-dependent methyl migration to produce 3-hydroxy-3-methyl-2-ketobutyrate (HMKB). In the reductase reaction, this 2-ketoacid undergoes a metal-dependent reduction by NADPH to yield (R)-2,3-dihydroxy-isovalerate. In Thioalkalivibrio sulfidiphilus (strain HL-EbGR7), this protein is Ketol-acid reductoisomerase (NADP(+)).